Consider the following 465-residue polypeptide: Mitochondrial-processing peptidase subunit beta (465 aa).

His-79 is a Zn(2+) binding site. Glu-82 serves as the catalytic Proton acceptor. 2 residues coordinate Zn(2+): His-83 and Glu-159.

It belongs to the peptidase M16 family. In terms of assembly, heterodimer of an alpha subunit and a beta subunit subunits, forming the mitochondrial processing protease (MPP) in which the alpha subunit is involved in substrate recognition and binding and the beta subunit is the catalytic subunit. Zn(2+) serves as cofactor.

It localises to the mitochondrion matrix. It carries out the reaction Release of N-terminal transit peptides from precursor proteins imported into the mitochondrion, typically with Arg in position P2.. Its activity is regulated as follows. Binding to the alpha subunit is required for catalytic activity. In terms of biological role, catalytic subunit of the essential mitochondrial processing protease (MPP), which cleaves the mitochondrial sequence off newly imported precursors proteins. Preferentially, cleaves after an arginine at position P2. The sequence is that of Mitochondrial-processing peptidase subunit beta (MPP1) from Blastocladiella emersonii (Aquatic fungus).